The chain runs to 152 residues: Small ribosomal subunit protein uS13A (152 aa).

Belongs to the universal ribosomal protein uS13 family. In terms of assembly, component of the small ribosomal subunit (SSU). Mature yeast ribosomes consist of a small (40S) and a large (60S) subunit. The 40S small subunit contains 1 molecule of ribosomal RNA (18S rRNA) and at least 33 different proteins. The large 60S subunit contains 3 rRNA molecules (25S, 5.8S and 5S rRNA) and at least 46 different proteins.

It is found in the cytoplasm. Functionally, component of the ribosome, a large ribonucleoprotein complex responsible for the synthesis of proteins in the cell. The small ribosomal subunit (SSU) binds messenger RNAs (mRNAs) and translates the encoded message by selecting cognate aminoacyl-transfer RNA (tRNA) molecules. The large subunit (LSU) contains the ribosomal catalytic site termed the peptidyl transferase center (PTC), which catalyzes the formation of peptide bonds, thereby polymerizing the amino acids delivered by tRNAs into a polypeptide chain. The nascent polypeptides leave the ribosome through a tunnel in the LSU and interact with protein factors that function in enzymatic processing, targeting, and the membrane insertion of nascent chains at the exit of the ribosomal tunnel. In Schizosaccharomyces pombe (strain 972 / ATCC 24843) (Fission yeast), this protein is Small ribosomal subunit protein uS13A (rps1801).